The chain runs to 341 residues: Glycerol-3-phosphate dehydrogenase [NAD(P)+] (341 aa).

4 residues coordinate NADPH: S14, F15, R35, and K108. Positions 108 and 136 each coordinate sn-glycerol 3-phosphate. An NADPH-binding site is contributed by A140. 5 residues coordinate sn-glycerol 3-phosphate: K191, D244, S254, R255, and N256. Residue K191 is the Proton acceptor of the active site. R255 is an NADPH binding site. NADPH contacts are provided by V279 and E281.

Belongs to the NAD-dependent glycerol-3-phosphate dehydrogenase family.

Its subcellular location is the cytoplasm. The enzyme catalyses sn-glycerol 3-phosphate + NAD(+) = dihydroxyacetone phosphate + NADH + H(+). It carries out the reaction sn-glycerol 3-phosphate + NADP(+) = dihydroxyacetone phosphate + NADPH + H(+). Its pathway is membrane lipid metabolism; glycerophospholipid metabolism. Its function is as follows. Catalyzes the reduction of the glycolytic intermediate dihydroxyacetone phosphate (DHAP) to sn-glycerol 3-phosphate (G3P), the key precursor for phospholipid synthesis. The sequence is that of Glycerol-3-phosphate dehydrogenase [NAD(P)+] from Pseudomonas fluorescens (strain SBW25).